A 209-amino-acid chain; its full sequence is Ribonuclease HII (209 aa).

The region spanning 20 to 209 (GLVAGVDEAG…VARSLPGACR (190 aa)) is the RNase H type-2 domain. 3 residues coordinate a divalent metal cation: Asp-26, Glu-27, and Asp-118.

Belongs to the RNase HII family. Mn(2+) serves as cofactor. The cofactor is Mg(2+).

It localises to the cytoplasm. It carries out the reaction Endonucleolytic cleavage to 5'-phosphomonoester.. Endonuclease that specifically degrades the RNA of RNA-DNA hybrids. The protein is Ribonuclease HII of Verminephrobacter eiseniae (strain EF01-2).